Here is a 102-residue protein sequence, read N- to C-terminus: Keratin-associated protein 25-1 (102 aa).

It belongs to the PMG family. In terms of assembly, interacts with hair keratins.

In the hair cortex, hair keratin intermediate filaments are embedded in an interfilamentous matrix, consisting of hair keratin-associated proteins (KRTAP), which are essential for the formation of a rigid and resistant hair shaft through their extensive disulfide bond cross-linking with abundant cysteine residues of hair keratins. The matrix proteins include the high-sulfur and high-glycine-tyrosine keratins. In Homo sapiens (Human), this protein is Keratin-associated protein 25-1 (KRTAP25-1).